We begin with the raw amino-acid sequence, 459 residues long: Adenylosuccinate synthetase isozyme 1 C (459 aa).

A disordered region spans residues Met-1–Thr-31. Polar residues predominate over residues Tyr-13–Gln-22. GTP contacts are provided by residues Gly-44–Lys-50 and Gly-72–Thr-74. Asp-45 acts as the Proton acceptor in catalysis. Residues Asp-45 and Gly-72 each contribute to the Mg(2+) site. Asp-45 contacts substrate. Residues Asp-45–Lys-48, Asn-70–His-73, Thr-165, Arg-179, Asn-258, Thr-273, and Arg-337 contribute to the IMP site. Catalysis depends on His-73, which acts as the Proton donor. Residue Val-333–Arg-339 coordinates substrate. GTP-binding positions include Arg-339, Lys-365 to Asp-367, and Gly-447 to Lys-450.

The protein belongs to the adenylosuccinate synthetase family. In terms of assembly, homodimer. Requires Mg(2+) as cofactor.

It is found in the cytoplasm. It carries out the reaction IMP + L-aspartate + GTP = N(6)-(1,2-dicarboxyethyl)-AMP + GDP + phosphate + 2 H(+). It functions in the pathway purine metabolism; AMP biosynthesis via de novo pathway; AMP from IMP: step 1/2. Its function is as follows. Component of the purine nucleotide cycle (PNC), which interconverts IMP and AMP to regulate the nucleotide levels in various tissues, and which contributes to glycolysis and ammoniagenesis. Catalyzes the first committed step in the biosynthesis of AMP from IMP. In Salmo salar (Atlantic salmon), this protein is Adenylosuccinate synthetase isozyme 1 C (adss1c).